Here is a 184-residue protein sequence, read N- to C-terminus: NEDD8-conjugating enzyme Ubc12 (184 aa).

The region spanning 30–175 is the UBC core domain; that stretch reads AGELRLHKDI…VRRAMTGGYV (146 aa). C113 functions as the Glycyl thioester intermediate in the catalytic mechanism.

The protein belongs to the ubiquitin-conjugating enzyme family. UBC12 subfamily. Interacts with RBX1. As to expression, expressed in shoot, root and floral meristems, and in vascular tissues of leaves.

Its pathway is protein modification; protein neddylation. Accepts the ubiquitin-like protein NEDD8/RUB1 from the ECR1-AXR1 E1 complex and catalyzes its covalent attachment to other proteins. The protein is NEDD8-conjugating enzyme Ubc12 (RCE1) of Arabidopsis thaliana (Mouse-ear cress).